The sequence spans 122 residues: UPF0102 protein Smed_3545 (122 aa).

This sequence belongs to the UPF0102 family.

This chain is UPF0102 protein Smed_3545, found in Sinorhizobium medicae (strain WSM419) (Ensifer medicae).